Here is a 255-residue protein sequence, read N- to C-terminus: ETS-related transcription factor Elf-5 (255 aa).

One can recognise a PNT domain in the interval 33 to 119; it reads YPAFEHQTAC…FILQSIRSQG (87 aa). Residues 163–244 constitute a DNA-binding region (ETS); that stretch reads SHLWEFVRDL…VDRRLVYKFG (82 aa).

This sequence belongs to the ETS family.

The protein localises to the nucleus. In terms of biological role, transcriptionally activator that may play a role in regulating the later stages of keratinocytes terminal differentiation. Binds to DNA sequences containing the consensus nucleotide core sequence GGA[AT]. This chain is ETS-related transcription factor Elf-5 (ELF5), found in Bos taurus (Bovine).